We begin with the raw amino-acid sequence, 345 residues long: MSDLVITRPDDWHLHLRDGDALATTVPATARLFSRAIVMPNLVPPVTHTAQAEAYRHRILSHVPAGAAFDPLMTLYLTNNTSPEEIVAARQSGIVYGCKLYPAGATTNSDAGVTDVANVFSVLEKMSDMGMPLLIHGEVVQADVDIFDREKRFIDETLTPLTERFPNLKIVLEHITTRDAVEFVNQAGSNVGATITAHHLLYNRNHMLVGGIRPHFYCLPILKRSEHQLALRDAAASGSDRFFLGTDSAPHPKEKKEAACGCAGCFTAPSALELYAEAFDELGALDKLEGFASLHGPTFYGLPINSGKVRLSKQEWTMPASMALGDSSIVPFRAGETIRWKAELL.

Zn(2+) is bound by residues H13 and H15. Residues 15-17 (HLR) and N41 contribute to the substrate site. Zn(2+) is bound by residues K99, H136, and H174. Position 99 is an N6-carboxylysine (K99). H136 serves as a coordination point for substrate. Residue L219 coordinates substrate. Zn(2+) is bound at residue D247. D247 is an active-site residue. Substrate contacts are provided by H251 and A263.

The protein belongs to the metallo-dependent hydrolases superfamily. DHOase family. Class II DHOase subfamily. In terms of assembly, homodimer. The cofactor is Zn(2+).

It catalyses the reaction (S)-dihydroorotate + H2O = N-carbamoyl-L-aspartate + H(+). Its pathway is pyrimidine metabolism; UMP biosynthesis via de novo pathway; (S)-dihydroorotate from bicarbonate: step 3/3. Functionally, catalyzes the reversible cyclization of carbamoyl aspartate to dihydroorotate. The sequence is that of Dihydroorotase from Hahella chejuensis (strain KCTC 2396).